The sequence spans 552 residues: Dihydroxy-acid dehydratase (552 aa).

Asp-78 lines the Mg(2+) pocket. Cys-119 contributes to the [2Fe-2S] cluster binding site. 2 residues coordinate Mg(2+): Asp-120 and Lys-121. Residue Lys-121 is modified to N6-carboxylysine. Cys-191 contributes to the [2Fe-2S] cluster binding site. Residue Glu-442 participates in Mg(2+) binding. The active-site Proton acceptor is Ser-468.

The protein belongs to the IlvD/Edd family. Homodimer. [2Fe-2S] cluster serves as cofactor. The cofactor is Mg(2+).

The enzyme catalyses (2R)-2,3-dihydroxy-3-methylbutanoate = 3-methyl-2-oxobutanoate + H2O. The catalysed reaction is (2R,3R)-2,3-dihydroxy-3-methylpentanoate = (S)-3-methyl-2-oxopentanoate + H2O. It participates in amino-acid biosynthesis; L-isoleucine biosynthesis; L-isoleucine from 2-oxobutanoate: step 3/4. The protein operates within amino-acid biosynthesis; L-valine biosynthesis; L-valine from pyruvate: step 3/4. Functions in the biosynthesis of branched-chain amino acids. Catalyzes the dehydration of (2R,3R)-2,3-dihydroxy-3-methylpentanoate (2,3-dihydroxy-3-methylvalerate) into 2-oxo-3-methylpentanoate (2-oxo-3-methylvalerate) and of (2R)-2,3-dihydroxy-3-methylbutanoate (2,3-dihydroxyisovalerate) into 2-oxo-3-methylbutanoate (2-oxoisovalerate), the penultimate precursor to L-isoleucine and L-valine, respectively. The sequence is that of Dihydroxy-acid dehydratase from Ruminiclostridium cellulolyticum (strain ATCC 35319 / DSM 5812 / JCM 6584 / H10) (Clostridium cellulolyticum).